A 132-amino-acid chain; its full sequence is Large-conductance mechanosensitive channel (132 aa).

Helical transmembrane passes span 14-34 (VLDM…VDSL), 39-59 (INPI…AVTI), and 68-88 (IGNF…VFLI).

It belongs to the MscL family. Homopentamer.

It is found in the cell membrane. Functionally, channel that opens in response to stretch forces in the membrane lipid bilayer. May participate in the regulation of osmotic pressure changes within the cell. This Latilactobacillus sakei subsp. sakei (strain 23K) (Lactobacillus sakei subsp. sakei) protein is Large-conductance mechanosensitive channel.